The following is an 83-amino-acid chain: Cell division topological specificity factor (83 aa).

This sequence belongs to the MinE family.

Prevents the cell division inhibition by proteins MinC and MinD at internal division sites while permitting inhibition at polar sites. This ensures cell division at the proper site by restricting the formation of a division septum at the midpoint of the long axis of the cell. In Alcanivorax borkumensis (strain ATCC 700651 / DSM 11573 / NCIMB 13689 / SK2), this protein is Cell division topological specificity factor.